A 526-amino-acid chain; its full sequence is Peptide chain release factor 3 (526 aa).

The region spanning 9 to 277 (DKRRTFAIIS…GIVEWAPVPQ (269 aa)) is the tr-type G domain. Residues 18–25 (SHPDAGKT), 86–90 (DTPGH), and 140–143 (NKLD) each bind GTP.

This sequence belongs to the TRAFAC class translation factor GTPase superfamily. Classic translation factor GTPase family. PrfC subfamily.

Its subcellular location is the cytoplasm. In terms of biological role, increases the formation of ribosomal termination complexes and stimulates activities of RF-1 and RF-2. It binds guanine nucleotides and has strong preference for UGA stop codons. It may interact directly with the ribosome. The stimulation of RF-1 and RF-2 is significantly reduced by GTP and GDP, but not by GMP. This chain is Peptide chain release factor 3, found in Shewanella pealeana (strain ATCC 700345 / ANG-SQ1).